Reading from the N-terminus, the 394-residue chain is Aromatic aminotransferase ISS1 (394 aa).

Residue Gly-2 is modified to N-acetylglycine. Gly-38 is a substrate binding site. Pyridoxal 5'-phosphate is bound by residues Tyr-64, 98–99 (AN), Tyr-123, Asn-176, Tyr-207, and 230–232 (SFS). Residues Tyr-123 and Asn-176 each coordinate substrate. Lys-233 carries the post-translational modification N6-(pyridoxal phosphate)lysine. Position 241 (Arg-241) interacts with pyridoxal 5'-phosphate. Residues Arg-362 and Arg-374 each coordinate substrate.

This sequence belongs to the class-I pyridoxal-phosphate-dependent aminotransferase family. Homodimer. It depends on pyridoxal 5'-phosphate as a cofactor. As to expression, expressed in roots, cotyledons and flowers.

The protein localises to the cytoplasm. It catalyses the reaction a 2-oxocarboxylate + L-methionine = 4-methylsulfanyl-2-oxobutanoate + an L-alpha-amino acid. It carries out the reaction L-tryptophan + 2-oxoglutarate = indole-3-pyruvate + L-glutamate. The enzyme catalyses L-tyrosine + 2-oxoglutarate = 3-(4-hydroxyphenyl)pyruvate + L-glutamate. Coordinates and prevents auxin (IAA) and ethylene biosynthesis, thus regulating auxin homeostasis in young seedlings. Shows aminotransferase activity with methionine; can use the ethylene biosynthetic intermediate L-methionine (L-Met) as an amino donor and the auxin biosynthetic intermediate, indole-3-pyruvic acid (3-IPA) as an amino acceptor to produce L-tryptophan (L-Trp) and 2-oxo-4-methylthiobutyric acid (KMBA). Can also use tryptophan (Trp), phenylalanine (Phe), and tyrosine (Tyr) as substrates. Regulates tryptophan (Trp) homeostasis and catabolism in mature plants. Also possibly involved in the metabolism of other aromatic amino acids and phenylpropanoid homeostasis. This Arabidopsis thaliana (Mouse-ear cress) protein is Aromatic aminotransferase ISS1.